Reading from the N-terminus, the 71-residue chain is Ubiquinol-cytochrome c reductase complex assembly factor 6 (71 aa).

Residues 1-8 (MPAGVPMS) are Mitochondrial matrix-facing. Residues 9–25 (TYLKMLAASLLAMCAGA) traverse the membrane as a helical; Signal-anchor for type II membrane protein segment. Residues 26–71 (EVVHRYYRPDLTIPEIPPKRGELKTELLGLKERKHKPQISQQEELK) are Mitochondrial intermembrane-facing. A disordered region spans residues 52–71 (LLGLKERKHKPQISQQEELK).

Belongs to the UQCC6 family. As to quaternary structure, interacts with UQCRC1. Interacts with UQCRQ. Interacts with UQCC5. Forms a complex, named COMB/coordinator of mitochondrial CYTB biogenesis, composed of UQCC1, UQCC2, UQCC4, UQCC5 and UQCC6; stabilizes nascent cytochrome b/MT-CYB and promotes its membrane insertion. Forms a complex, named COMA, composed of UQCC1, UQCC2 and UQCC4; activates MT-CYB translation. Forms a complex, named COMC, composed of UQCC1, UQCC2; UQCC3 and UQCC4; mediates MT-CYB hemylation and association with the first nuclear-encoded complex III subunit UQCRQ. Interacts with MT-CYB.

The protein resides in the mitochondrion inner membrane. Functionally, required for the assembly and stability of the mitochondrial ubiquinol-cytochrome c reductase complex (complex III (CIII) or cytochrome b-c1 complex), a multisubunit transmembrane complex that is part of the mitochondrial electron transport chain (ETC) which drives oxidative phosphorylation. Mediates early complex III biogenesis. Participates in regulating the levels of electron transport chain proteins, and therefore energy supply, in response to changes in energy demand. Also required for cytochrome c oxidase complex (complex IV) assembly. The sequence is that of Ubiquinol-cytochrome c reductase complex assembly factor 6 from Pongo abelii (Sumatran orangutan).